A 654-amino-acid polypeptide reads, in one-letter code: MVQKKYCEAIHQTERRPTRIVNVGNVGIGGNHPIRIQSMTTSSTRDVEATIEQVIRLADQGCEIVRVTVQGIKEADACEHIKKGLIKRGYQIPLVADIHFYPPAAMRVVDFVDKVRINPGNFVDKRASFKQIVYDDESYAREIERIEEKFTPLVEKCKRLNRAMRIGTNHGSLSDRIMNRYGDTPFGMVESALEFARICRKNDYHNFLFSMKASNPQVMIQAYRLLTQAMYALEWDYPLHLGVTEAGEGEDGRIKSAMGIGSLLIDGIGDTIRVSLTEDPWHEINPCQRLIKLASAYQQQGVAPFIENYRQIEAIERRQVHLSSTVPMHRDGTVFISLPINMLKEASLYQQIGCEGPFGKPKLKTATADNLVLKNPNSDSEEKRQLQILKDLGIGLFSKDPFEMSLVIHPLKKWLQSRAVDSFASRFSSSWAKSAGQPLIIQITDETEKEWKEVISLKPQLIILSPSTNRLHYSRQFFEWLQQNQLNYPVILNFTYQGENEDTILLASMECGSLLCDGLGEGVWLEGPYDILFLRQLSFSILQAARLRMSKTDFISCPSCGRTLFNLQDVTKRIQSRTSHLPGVKIAIMGCIVNGPGEMADADFGYVGSKPGKIDLYVGKECVEKDIDFADADDRLVNLIRAHGRWIEPQTVNA.

Positions 557, 560, 591, and 598 each coordinate [4Fe-4S] cluster.

Belongs to the IspG family. It depends on [4Fe-4S] cluster as a cofactor.

It catalyses the reaction (2E)-4-hydroxy-3-methylbut-2-enyl diphosphate + oxidized [flavodoxin] + H2O + 2 H(+) = 2-C-methyl-D-erythritol 2,4-cyclic diphosphate + reduced [flavodoxin]. It participates in isoprenoid biosynthesis; isopentenyl diphosphate biosynthesis via DXP pathway; isopentenyl diphosphate from 1-deoxy-D-xylulose 5-phosphate: step 5/6. Its function is as follows. Converts 2C-methyl-D-erythritol 2,4-cyclodiphosphate (ME-2,4cPP) into 1-hydroxy-2-methyl-2-(E)-butenyl 4-diphosphate. This is 4-hydroxy-3-methylbut-2-en-1-yl diphosphate synthase (flavodoxin) from Protochlamydia amoebophila (strain UWE25).